The chain runs to 282 residues: Aldo-keto reductase BQ2027_MB2996 (282 aa).

The active-site Proton donor is the Y57. The NADPH site is built by L197, V235, R237, S238, A239, R243, S246, N247, and R273.

The protein belongs to the aldo/keto reductase family.

This chain is Aldo-keto reductase BQ2027_MB2996, found in Mycobacterium bovis (strain ATCC BAA-935 / AF2122/97).